Reading from the N-terminus, the 805-residue chain is Zinc finger CCCH domain-containing protein 11B (805 aa).

C3H1-type zinc fingers lie at residues 2–29 and 31–57; these read PNQG…HCEA and LGNE…HMEI. Disordered stretches follow at residues 140-194, 223-351, 364-433, 449-468, 481-506, and 715-805; these read KVES…GLRV, KKMK…DKVN, MLLE…TCIK, IVAS…SMQE, KALR…PGAR, and VTVP…PLEL. Residues 160–175 are compositionally biased toward acidic residues; the sequence is ADDDEDDDDQFSEEGD. Residues 364 to 390 show a composition bias toward basic and acidic residues; that stretch reads MLLERASQKHGESQTKLKTEGPSKTDD. Polar residues predominate over residues 391–402; sequence STSGARSSSTIR. The stretch at 403–423 forms a coiled coil; the sequence is IKTFSEVLAEEEHRQQEAERQ. Composition is skewed to basic and acidic residues over residues 412 to 433 and 455 to 468; these read EEEH…TCIK and QSEE…SMQE. Low complexity-rich tracts occupy residues 486-498 and 730-749; these read QQSS…SPSQ and PPTQ…PSSS. The span at 750–763 shows a compositional bias: polar residues; the sequence is QMSMKTRRLSSAST. The segment covering 789–805 has biased composition (acidic residues); sequence EIDLDPGKDEDDLPLEL.

Functionally, may play a role in mRNA transport. The polypeptide is Zinc finger CCCH domain-containing protein 11B (Homo sapiens (Human)).